The chain runs to 156 residues: Ribonuclease pancreatic (156 aa).

The first 28 residues, 1–28, serve as a signal peptide directing secretion; it reads MALEKSLVRLLLLVLILLVLGWVQPSLG. The segment covering 33–43 has biased composition (basic and acidic residues); sequence AKKFQRQHMDS. The tract at residues 33 to 53 is disordered; the sequence is AKKFQRQHMDSDSSPSSSSTY. Lys-35 and Arg-38 together coordinate substrate. Residue His-40 is the Proton acceptor of the active site. Intrachain disulfides connect Cys-54–Cys-112, Cys-68–Cys-123, Cys-86–Cys-138, and Cys-93–Cys-100. A glycan (N-linked (GlcNAc...) asparagine; partial) is linked at Asn-62. Substrate is bound by residues 69–73 and Lys-94; that span reads KPVNT. Residue Asn-104 is glycosylated (N-linked (GlcNAc...) asparagine). A substrate-binding site is contributed by Arg-113. Residue Asn-116 is glycosylated (N-linked (GlcNAc...) asparagine). The Proton donor role is filled by His-147.

Belongs to the pancreatic ribonuclease family. Monomer. Interacts with and forms tight 1:1 complexes with RNH1. Dimerization of two such complexes may occur. Interaction with RNH1 inhibits this protein. In terms of processing, N-linked glycans are of complex type. As to expression, pancreas and other tissues and body fluids (indicating it may have other physiological functions besides its role in digestion).

The protein localises to the secreted. It catalyses the reaction an [RNA] containing cytidine + H2O = an [RNA]-3'-cytidine-3'-phosphate + a 5'-hydroxy-ribonucleotide-3'-[RNA].. The catalysed reaction is an [RNA] containing uridine + H2O = an [RNA]-3'-uridine-3'-phosphate + a 5'-hydroxy-ribonucleotide-3'-[RNA].. Its function is as follows. Endonuclease that catalyzes the cleavage of RNA on the 3' side of pyrimidine nucleotides. Acts on single-stranded and double-stranded RNA. The chain is Ribonuclease pancreatic (RNASE1) from Homo sapiens (Human).